Here is a 238-residue protein sequence, read N- to C-terminus: 2-C-methyl-D-erythritol 4-phosphate cytidylyltransferase (238 aa).

Belongs to the IspD/TarI cytidylyltransferase family. IspD subfamily.

The catalysed reaction is 2-C-methyl-D-erythritol 4-phosphate + CTP + H(+) = 4-CDP-2-C-methyl-D-erythritol + diphosphate. It functions in the pathway isoprenoid biosynthesis; isopentenyl diphosphate biosynthesis via DXP pathway; isopentenyl diphosphate from 1-deoxy-D-xylulose 5-phosphate: step 2/6. Functionally, catalyzes the formation of 4-diphosphocytidyl-2-C-methyl-D-erythritol from CTP and 2-C-methyl-D-erythritol 4-phosphate (MEP). This Shewanella amazonensis (strain ATCC BAA-1098 / SB2B) protein is 2-C-methyl-D-erythritol 4-phosphate cytidylyltransferase.